The following is a 216-amino-acid chain: Large ribosomal subunit protein uL3 (216 aa).

Residue Gln-157 is modified to N5-methylglutamine.

The protein belongs to the universal ribosomal protein uL3 family. Part of the 50S ribosomal subunit. Forms a cluster with proteins L14 and L19. In terms of processing, methylated by PrmB.

Its function is as follows. One of the primary rRNA binding proteins, it binds directly near the 3'-end of the 23S rRNA, where it nucleates assembly of the 50S subunit. This Stenotrophomonas maltophilia (strain R551-3) protein is Large ribosomal subunit protein uL3.